The chain runs to 129 residues: Small ribosomal subunit protein uS11 (129 aa).

Belongs to the universal ribosomal protein uS11 family. In terms of assembly, part of the 30S ribosomal subunit. Interacts with proteins S7 and S18. Binds to IF-3.

Its function is as follows. Located on the platform of the 30S subunit, it bridges several disparate RNA helices of the 16S rRNA. Forms part of the Shine-Dalgarno cleft in the 70S ribosome. The sequence is that of Small ribosomal subunit protein uS11 from Geobacillus sp. (strain WCH70).